Here is a 122-residue protein sequence, read N- to C-terminus: Large ribosomal subunit protein uL14 (122 aa).

The protein belongs to the universal ribosomal protein uL14 family. In terms of assembly, part of the 50S ribosomal subunit. Forms a cluster with proteins L3 and L19. In the 70S ribosome, L14 and L19 interact and together make contacts with the 16S rRNA in bridges B5 and B8.

In terms of biological role, binds to 23S rRNA. Forms part of two intersubunit bridges in the 70S ribosome. In Pseudomonas savastanoi pv. phaseolicola (strain 1448A / Race 6) (Pseudomonas syringae pv. phaseolicola (strain 1448A / Race 6)), this protein is Large ribosomal subunit protein uL14.